The following is a 168-amino-acid chain: Photosystem I assembly protein Ycf3 (168 aa).

TPR repeat units lie at residues 35 to 68 (AFTY…EIDP), 72 to 105 (SYIL…NPFL), and 120 to 153 (GEQA…TPGN).

This sequence belongs to the Ycf3 family.

It is found in the plastid. The protein resides in the chloroplast thylakoid membrane. Essential for the assembly of the photosystem I (PSI) complex. May act as a chaperone-like factor to guide the assembly of the PSI subunits. The sequence is that of Photosystem I assembly protein Ycf3 from Phalaenopsis aphrodite subsp. formosana (Moth orchid).